The following is a 267-amino-acid chain: Tryptophan synthase alpha chain (267 aa).

Catalysis depends on proton acceptor residues glutamate 47 and aspartate 58.

The protein belongs to the TrpA family. Tetramer of two alpha and two beta chains.

It carries out the reaction (1S,2R)-1-C-(indol-3-yl)glycerol 3-phosphate + L-serine = D-glyceraldehyde 3-phosphate + L-tryptophan + H2O. It participates in amino-acid biosynthesis; L-tryptophan biosynthesis; L-tryptophan from chorismate: step 5/5. Its function is as follows. The alpha subunit is responsible for the aldol cleavage of indoleglycerol phosphate to indole and glyceraldehyde 3-phosphate. The protein is Tryptophan synthase alpha chain of Pelodictyon phaeoclathratiforme (strain DSM 5477 / BU-1).